A 906-amino-acid chain; its full sequence is Protein translocase subunit SecA (906 aa).

Residues Gln86, 104 to 108 (GEGKT), and Asp511 each bind ATP. Composition is skewed to basic and acidic residues over residues 853–865 (HESV…RHDE) and 877–888 (VRREGPKVKRND). The disordered stretch occupies residues 853-906 (HESVIDNNQRHDEDEQEEAPKVQQVRREGPKVKRNDPCPCGSGKKYKQCHSKVE). Zn(2+)-binding residues include Cys890, Cys892, Cys901, and His902. The segment covering 896-906 (KKYKQCHSKVE) has biased composition (basic residues).

This sequence belongs to the SecA family. As to quaternary structure, monomer and homodimer. Part of the essential Sec protein translocation apparatus which comprises SecA, SecYEG and auxiliary proteins SecDF-YajC and YidC. It depends on Zn(2+) as a cofactor.

Its subcellular location is the cell inner membrane. The protein resides in the cytoplasm. It carries out the reaction ATP + H2O + cellular proteinSide 1 = ADP + phosphate + cellular proteinSide 2.. Its function is as follows. Part of the Sec protein translocase complex. Interacts with the SecYEG preprotein conducting channel. Has a central role in coupling the hydrolysis of ATP to the transfer of proteins into and across the cell membrane, serving both as a receptor for the preprotein-SecB complex and as an ATP-driven molecular motor driving the stepwise translocation of polypeptide chains across the membrane. The polypeptide is Protein translocase subunit SecA (Francisella tularensis subsp. mediasiatica (strain FSC147)).